Reading from the N-terminus, the 358-residue chain is Probable undecaprenyl-phosphate N-acetylglucosaminyl 1-phosphate transferase (358 aa).

11 consecutive transmembrane segments (helical) span residues 10-32 (VVAF…RIAI), 53-72 (MGGL…SGIY), 76-93 (RMTA…LGIL), 105-127 (FLIQ…FFSV), 137-157 (GWMA…AINL), 164-181 (LAAG…VMAL), 186-205 (VLIL…FLFY), 218-235 (GSLF…LGLY), 240-262 (LFSI…FAII), 292-311 (MSVL…AIVL), and 316-338 (IWLS…EVTG).

This sequence belongs to the glycosyltransferase 4 family. Requires Mg(2+) as cofactor. Mn(2+) serves as cofactor.

It is found in the cell membrane. The catalysed reaction is di-trans,octa-cis-undecaprenyl phosphate + UDP-N-acetyl-alpha-D-glucosamine = N-acetyl-alpha-D-glucosaminyl-di-trans,octa-cis-undecaprenyl diphosphate + UMP. Its pathway is cell wall biogenesis; poly(glucopyranosyl N-acetylgalactosamine 1-phosphate) teichoic acid biosynthesis. It functions in the pathway cell wall biogenesis; poly(glycerol phosphate) teichoic acid biosynthesis. Catalyzes the formation of undecaprenyl-PP-N-acetylglucosamine. Involved in the synthesis of anionic cell-wall polymers as it mediates the initiation of the linkage unit formation that appears to be common to the two types of teichoic acids attached to the peptidoglycan of B.subtilis; may also be involved in teichuronic acid biosynthesis. This chain is Probable undecaprenyl-phosphate N-acetylglucosaminyl 1-phosphate transferase (tagO), found in Bacillus subtilis (strain 168).